Here is a 481-residue protein sequence, read N- to C-terminus: Proline--tRNA ligase (481 aa).

Belongs to the class-II aminoacyl-tRNA synthetase family. ProS type 3 subfamily. As to quaternary structure, homodimer.

Its subcellular location is the cytoplasm. The enzyme catalyses tRNA(Pro) + L-proline + ATP = L-prolyl-tRNA(Pro) + AMP + diphosphate. Its function is as follows. Catalyzes the attachment of proline to tRNA(Pro) in a two-step reaction: proline is first activated by ATP to form Pro-AMP and then transferred to the acceptor end of tRNA(Pro). In Saccharolobus islandicus (strain M.16.27) (Sulfolobus islandicus), this protein is Proline--tRNA ligase.